The following is a 276-amino-acid chain: Rhamnulose-1-phosphate aldolase (276 aa).

Glu117 is an active-site residue. Zn(2+)-binding residues include His141, His143, and His212.

Belongs to the aldolase class II family. RhaD subfamily. As to quaternary structure, homotetramer. It depends on Zn(2+) as a cofactor.

It is found in the cytoplasm. The catalysed reaction is L-rhamnulose 1-phosphate = (S)-lactaldehyde + dihydroxyacetone phosphate. Its pathway is carbohydrate degradation; L-rhamnose degradation; glycerone phosphate from L-rhamnose: step 3/3. In terms of biological role, catalyzes the reversible cleavage of L-rhamnulose-1-phosphate to dihydroxyacetone phosphate (DHAP) and L-lactaldehyde. The protein is Rhamnulose-1-phosphate aldolase of Enterobacter sp. (strain 638).